Reading from the N-terminus, the 879-residue chain is Protein translocase subunit SecA (879 aa).

ATP contacts are provided by residues Q87, 105–109, and D509; that span reads GEGKT. The interval 834–879 is disordered; the sequence is IAEDSEKLKPITGTKKPKRNDPCPCGSGKKYKNCCGQSGPKKGLLA. Residues C856, C858, C867, and C868 each coordinate Zn(2+).

Belongs to the SecA family. In terms of assembly, monomer and homodimer. Part of the essential Sec protein translocation apparatus which comprises SecA, SecYEG and auxiliary proteins SecDF-YajC and YidC. It depends on Zn(2+) as a cofactor.

Its subcellular location is the cell inner membrane. It is found in the cytoplasm. It catalyses the reaction ATP + H2O + cellular proteinSide 1 = ADP + phosphate + cellular proteinSide 2.. Part of the Sec protein translocase complex. Interacts with the SecYEG preprotein conducting channel. Has a central role in coupling the hydrolysis of ATP to the transfer of proteins into and across the cell membrane, serving as an ATP-driven molecular motor driving the stepwise translocation of polypeptide chains across the membrane. In Sulfurovum sp. (strain NBC37-1), this protein is Protein translocase subunit SecA.